We begin with the raw amino-acid sequence, 542 residues long: Nif-specific regulatory protein (542 aa).

The GAF domain maps to 29–170 (DLSKTLREVL…MVANLIGQTV (142 aa)). The region spanning 203-432 (VIGISKAMQE…LENCVERTAT (230 aa)) is the Sigma-54 factor interaction domain. ATP-binding positions include 231–238 (GESGTGKE) and 294–303 (AHGGTLFLDE). An inter-domain linker region spans residues 433 to 499 (MMRGDLITEV…ATGAAPPTSE (67 aa)). A divalent metal cation contacts are provided by Cys446 and Cys451. The interval 500 to 542 (RERLIWAMEQCGWVQAKAARALNISPRQMGYALQKFNIEVKKF) is C-terminal DNA-binding domain. A DNA-binding region (H-T-H motif) is located at residues 514–533 (QAKAARALNISPRQMGYALQ).

In terms of assembly, interacts with sigma-54.

In terms of biological role, required for activation of most nif operons, which are directly involved in nitrogen fixation. The chain is Nif-specific regulatory protein (nifA) from Herbaspirillum seropedicae.